The primary structure comprises 1072 residues: Integrin alpha-6 (1072 aa).

An N-terminal signal peptide occupies residues methionine 1–alanine 18. Topologically, residues phenylalanine 19–threonine 1010 are extracellular. FG-GAP repeat units lie at residues alanine 23 to cysteine 88, aspartate 94 to aspartate 160, aspartate 170 to leucine 223, arginine 238 to leucine 295, serine 296 to glycine 357, isoleucine 358 to threonine 413, and glutamate 414 to aspartate 476. An N-linked (GlcNAc...) asparagine glycan is attached at asparagine 71. 3 disulfides stabilise this stretch: cysteine 79–cysteine 88, cysteine 125–cysteine 148, and cysteine 169–cysteine 182. N-linked (GlcNAc...) asparagine glycans are attached at residues asparagine 217 and asparagine 278. Ca(2+) is bound by residues aspartate 318, asparagine 320, aspartate 322, and aspartate 326. N-linked (GlcNAc...) asparagine glycosylation is present at asparagine 364. Residues aspartate 380, asparagine 382, aspartate 384, tyrosine 386, aspartate 388, aspartate 438, aspartate 440, asparagine 442, tyrosine 444, and aspartate 446 each coordinate Ca(2+). An intrachain disulfide couples cysteine 498 to cysteine 557. N-linked (GlcNAc...) asparagine glycans are attached at residues asparagine 515 and asparagine 609. 2 cysteine pairs are disulfide-bonded: cysteine 625-cysteine 631 and cysteine 725-cysteine 736. 3 N-linked (GlcNAc...) asparagine glycosylation sites follow: asparagine 730, asparagine 747, and asparagine 780. Intrachain disulfides connect cysteine 880/cysteine 927 and cysteine 933/cysteine 938. An N-linked (GlcNAc...) asparagine glycan is attached at asparagine 957. A helical membrane pass occupies residues glycine 1011–tryptophan 1036. The Cytoplasmic portion of the chain corresponds to lysine 1037–alanine 1072. Cysteine 1038 carries S-palmitoyl cysteine; by DHHC3 lipidation. The GFFKR motif signature appears at glycine 1039–arginine 1043. At serine 1070 the chain carries Phosphoserine; by CaMK2.

The protein belongs to the integrin alpha chain family. In terms of assembly, heterodimer of an alpha and a beta subunit. The alpha subunit is composed of a heavy and a light chain linked by a disulfide bond. Alpha-6 associates with either beta-1 (ITGB1) or beta-4 (ITGB4) to form ITGA6:ITGB1 and ITGA6:ITGB4, respectively. In terms of processing, phosphorylated in vivo.

The protein resides in the cell membrane. Integrin alpha-6/beta-1 (ITGA6:ITGB1) is a receptor for laminin on platelets. Integrin alpha-6/beta-1 (ITGA6:ITGB1) is present in oocytes and is involved in sperm-egg fusion. Integrin alpha-6/beta-4 (ITGA6:ITGB4) is a receptor for laminin in epithelial cells and it plays a critical structural role in the hemidesmosome. The protein is Integrin alpha-6 (ITGA6) of Gallus gallus (Chicken).